A 122-amino-acid chain; its full sequence is Nuclear transport factor 2A (122 aa).

Met-1 is subject to N-acetylmethionine. The region spanning 6–119 (VAKAFVEHYY…YYVFNDIFRL (114 aa)) is the NTF2 domain.

Interacts with RAN1. In terms of tissue distribution, expressed in roots, stems, leaves and flowers, and, at low levels, in siliques.

The protein resides in the cytoplasm. It is found in the nucleus. Its subcellular location is the nucleus envelope. Its function is as follows. Facilitates protein transport into the nucleus. Interacts with various nucleoporins and with Ran-GDP. Could be part of a multicomponent system of cytosolic factors that assemble at the pore complex during nuclear import. This is Nuclear transport factor 2A from Arabidopsis thaliana (Mouse-ear cress).